The sequence spans 641 residues: tRNA 5-methylaminomethyl-2-thiouridine biosynthesis bifunctional protein MnmC (641 aa).

The tract at residues 1–219 (MTVSKILKQI…PYPICSAAVT (219 aa)) is tRNA (mnm(5)s(2)U34)-methyltransferase. Residues 232 to 641 (IGGGVASACL…GKALEVGVEV (410 aa)) are FAD-dependent cmnm(5)s(2)U34 oxidoreductase.

It in the N-terminal section; belongs to the methyltransferase superfamily. tRNA (mnm(5)s(2)U34)-methyltransferase family. The protein in the C-terminal section; belongs to the DAO family. FAD is required as a cofactor.

It is found in the cytoplasm. The enzyme catalyses 5-aminomethyl-2-thiouridine(34) in tRNA + S-adenosyl-L-methionine = 5-methylaminomethyl-2-thiouridine(34) in tRNA + S-adenosyl-L-homocysteine + H(+). Its function is as follows. Catalyzes the last two steps in the biosynthesis of 5-methylaminomethyl-2-thiouridine (mnm(5)s(2)U) at the wobble position (U34) in tRNA. Catalyzes the FAD-dependent demodification of cmnm(5)s(2)U34 to nm(5)s(2)U34, followed by the transfer of a methyl group from S-adenosyl-L-methionine to nm(5)s(2)U34, to form mnm(5)s(2)U34. In Shewanella pealeana (strain ATCC 700345 / ANG-SQ1), this protein is tRNA 5-methylaminomethyl-2-thiouridine biosynthesis bifunctional protein MnmC.